A 706-amino-acid polypeptide reads, in one-letter code: Putative pentatricopeptide repeat-containing protein At3g47840 (706 aa).

PPR repeat units lie at residues 39–69 (VKFD…MPHG), 70–104 (DIVS…DHAV), 107–141 (DTSV…SLLS), 142–172 (SVYV…MPFR), 173–203 (NAVT…MSRS), 208–242 (DTYT…GFVT), 243–273 (TLCV…MSER), 274–308 (DVVS…QVPP), 309–343 (NEQT…GLND), 344–374 (SLSV…MRCR), 375–409 (DIIS…GTKP), 410–444 (TDFA…GLEQ), 445–475 (NSTV…TDRD), 476–510 (DIVS…GFRP), 511–541 (DSVT…MQET), and 547–577 (AKEH…MSWK). The type E motif stretch occupies residues 582 to 657 (VWTTLLIACK…EPGWSSIKIK (76 aa)). Positions 658-688 (DCVSAFVSGDRFHPQSEDIYNILELAVSGAE) are type E(+) motif.

Belongs to the PPR family. PCMP-E subfamily.

The polypeptide is Putative pentatricopeptide repeat-containing protein At3g47840 (PCMP-E43) (Arabidopsis thaliana (Mouse-ear cress)).